Consider the following 281-residue polypeptide: tRNA uridine(34) hydroxylase (281 aa).

One can recognise a Rhodanese domain in the interval 121-214 (SQPDVLVIDT…YLEKTHNKSG (94 aa)). Cys174 serves as the catalytic Cysteine persulfide intermediate.

Belongs to the TrhO family.

The enzyme catalyses uridine(34) in tRNA + AH2 + O2 = 5-hydroxyuridine(34) in tRNA + A + H2O. Functionally, catalyzes oxygen-dependent 5-hydroxyuridine (ho5U) modification at position 34 in tRNAs. The chain is tRNA uridine(34) hydroxylase from Wolbachia pipientis subsp. Culex pipiens (strain wPip).